A 614-amino-acid polypeptide reads, in one-letter code: uncharacterized protein (614 aa).

2 helical membrane passes run 494–516 and 552–574; these read VAYW…GSTL and LLIG…IVHA. Residues 588-614 are disordered; it reads AVRPRADKDIQTLTHRDEAEEDQEEDS. Basic and acidic residues predominate over residues 591–605; it reads PRADKDIQTLTHRDE.

The protein resides in the cell membrane. This is an uncharacterized protein from Treponema pallidum (strain Nichols).